A 437-amino-acid polypeptide reads, in one-letter code: Bile acid CoA-transferase BaiK (437 aa).

Asp-171 acts as the Nucleophile in catalysis.

Belongs to the CoA-transferase III family.

The catalysed reaction is deoxycholoyl-CoA + cholate = choloyl-CoA + deoxycholate. It catalyses the reaction allodeoxycholoyl-CoA + cholate = allodeoxycholate + choloyl-CoA. It carries out the reaction allocholate + deoxycholoyl-CoA = allocholoyl-CoA + deoxycholate. The enzyme catalyses allocholate + allodeoxycholoyl-CoA = allocholoyl-CoA + allodeoxycholate. The catalysed reaction is ursodeoxycholate + deoxycholoyl-CoA = ursodeoxycholoyl-CoA + deoxycholate. It catalyses the reaction allodeoxycholoyl-CoA + ursodeoxycholate = ursodeoxycholoyl-CoA + allodeoxycholate. Its pathway is lipid metabolism; bile acid biosynthesis. Its function is as follows. Functions in the bile acid 7alpha-dehydroxylation pathway, which forms secondary bile acids via the 7alpha-dehydroxylation of primary bile acids, and is carried out by intestinal anaerobic bacteria. Acts as a bile acid CoA transferase with broad bile acid substrate specificity. Catalyzes the transfer of the CoA moiety of secondary bile acid-CoA compounds to primary bile acids. Can use deoxycholoyl-CoA and allodeoxycholoyl-CoA as bile acid CoA donors and cholate, allocholate and ursodeoxycholate as bile acid CoA acceptors. Shows no activity when lithocholoyl-CoA is used as the CoA donor. The protein is Bile acid CoA-transferase BaiK of Clostridium scindens (strain JCM 10418 / VPI 12708).